A 1007-amino-acid polypeptide reads, in one-letter code: Ephrin type-A receptor 10 (1007 aa).

The first 22 residues, 1–22, serve as a signal peptide directing secretion; sequence METGAGPHPLRLFVCLIPLCLA. The Extracellular portion of the chain corresponds to 23–565; sequence LLLGPGRPGT…APGSRDQSPA (543 aa). Residues 35 to 216 enclose the Eph LBD domain; sequence EVILLDSKAS…YYKQCRATVR (182 aa). N-linked (GlcNAc...) asparagine glycosylation occurs at asparagine 311. Disordered stretches follow at residues 323 to 343 and 467 to 486; these read ARSP…APRD and PQSV…PGTN. Fibronectin type-III domains follow at residues 340–452 and 456–554; these read APRD…TGPG and EEDE…TPGE. N-linked (GlcNAc...) asparagine glycosylation occurs at asparagine 486. The helical transmembrane segment at 566-586 threads the bilayer; it reads VVVTVVTISALLVLGSVMSVL. The Cytoplasmic portion of the chain corresponds to 587–1007; sequence AIWRRPCDGK…LQLQGQGVQV (421 aa). The Protein kinase domain maps to 644 to 899; sequence VTLEKSLGAG…PRFSQIHSIL (256 aa). The SAM domain occupies 932–996; it reads PSFGSVGAWL…LSGISALQTR (65 aa).

This sequence belongs to the protein kinase superfamily. Tyr protein kinase family. Ephrin receptor subfamily. In terms of tissue distribution, expressed in the cochlea, in the organ of Corti, spiral ganglion, and stria vascularis.

It is found in the cell membrane. The enzyme catalyses L-tyrosyl-[protein] + ATP = O-phospho-L-tyrosyl-[protein] + ADP + H(+). In terms of biological role, receptor for members of the ephrin-A family. Binds to EFNA3, EFNA4 and EFNA5. The chain is Ephrin type-A receptor 10 (Epha10) from Mus musculus (Mouse).